The following is a 105-amino-acid chain: Zinc metalloproteinase/disintegrin (105 aa).

Residues 1 to 3 (DEP) enclose the Peptidase M12B domain. A Disintegrin domain is found at 11-96 (PPVCGNYFVE…AECTDRFQRN (86 aa)). 6 disulfides stabilise this stretch: C25–C43, C27–C38, C37–C60, C51–C57, C56–C82, and C69–C89. The D/ECD-tripeptide motif lies at 75–77 (ECD). Positions 99–105 (PCQNNNG) are excised as a propeptide.

It belongs to the venom metalloproteinase (M12B) family. P-III subfamily. Monomer. Requires Zn(2+) as cofactor. In terms of tissue distribution, expressed by the venom gland.

The protein resides in the secreted. Impairs hemostasis in the envenomed animal. In terms of biological role, inhibits platelet aggregation induced by ADP, thrombin, platelet-activating factor and collagen. Acts by inhibiting fibrinogen interaction with platelet receptors GPIIb/GPIIIa (ITGA2B/ITGB3). This chain is Zinc metalloproteinase/disintegrin, found in Gloydius brevicauda (Korean slamosa snake).